We begin with the raw amino-acid sequence, 273 residues long: 4-hydroxy-tetrahydrodipicolinate reductase (273 aa).

NAD(+)-binding positions include 12–17 (GAGGRM) and glutamate 38. Residue arginine 39 participates in NADP(+) binding. NAD(+)-binding positions include 102-104 (GTT) and 126-129 (AANF). Histidine 159 (proton donor/acceptor) is an active-site residue. A (S)-2,3,4,5-tetrahydrodipicolinate-binding site is contributed by histidine 160. The active-site Proton donor is the lysine 163. 169–170 (GT) contacts (S)-2,3,4,5-tetrahydrodipicolinate.

The protein belongs to the DapB family. As to quaternary structure, homotetramer.

The protein resides in the cytoplasm. It carries out the reaction (S)-2,3,4,5-tetrahydrodipicolinate + NAD(+) + H2O = (2S,4S)-4-hydroxy-2,3,4,5-tetrahydrodipicolinate + NADH + H(+). The enzyme catalyses (S)-2,3,4,5-tetrahydrodipicolinate + NADP(+) + H2O = (2S,4S)-4-hydroxy-2,3,4,5-tetrahydrodipicolinate + NADPH + H(+). The protein operates within amino-acid biosynthesis; L-lysine biosynthesis via DAP pathway; (S)-tetrahydrodipicolinate from L-aspartate: step 4/4. Functionally, catalyzes the conversion of 4-hydroxy-tetrahydrodipicolinate (HTPA) to tetrahydrodipicolinate. The chain is 4-hydroxy-tetrahydrodipicolinate reductase from Proteus mirabilis (strain HI4320).